The sequence spans 227 residues: UPF0758 protein Psyc_1834 (227 aa).

The MPN domain maps to 102-224 (GLGRSQMVKD…TLSYAENCLA (123 aa)). Zn(2+) contacts are provided by His-173, His-175, and Asp-186. A JAMM motif motif is present at residues 173–186 (HNHPHTDATPSTAD).

It belongs to the UPF0758 family.

This is UPF0758 protein Psyc_1834 from Psychrobacter arcticus (strain DSM 17307 / VKM B-2377 / 273-4).